Reading from the N-terminus, the 88-residue chain is Probable glutaredoxin ssr2061 (88 aa).

Residues Cys-15 and Cys-18 are joined by a disulfide bond.

The protein belongs to the glutaredoxin family.

Has a glutathione-disulfide oxidoreductase activity in the presence of NADPH and glutathione reductase. Reduces low molecular weight disulfides and proteins. This chain is Probable glutaredoxin ssr2061, found in Synechocystis sp. (strain ATCC 27184 / PCC 6803 / Kazusa).